A 129-amino-acid polypeptide reads, in one-letter code: uncharacterized protein (129 aa).

2 helical membrane-spanning segments follow: residues Phe4–Ile24 and Val37–Ile57.

This sequence to B.burgdorferi BBF20.

The protein localises to the cell membrane. This is an uncharacterized protein from Borreliella burgdorferi (strain ATCC 35210 / DSM 4680 / CIP 102532 / B31) (Borrelia burgdorferi).